Consider the following 164-residue polypeptide: Crossover junction endodeoxyribonuclease RuvC (164 aa).

Active-site residues include Asp7, Glu67, and Asp140. Asp7, Glu67, and Asp140 together coordinate Mg(2+).

Belongs to the RuvC family. Homodimer which binds Holliday junction (HJ) DNA. The HJ becomes 2-fold symmetrical on binding to RuvC with unstacked arms; it has a different conformation from HJ DNA in complex with RuvA. In the full resolvosome a probable DNA-RuvA(4)-RuvB(12)-RuvC(2) complex forms which resolves the HJ. Mg(2+) serves as cofactor.

It is found in the cytoplasm. It carries out the reaction Endonucleolytic cleavage at a junction such as a reciprocal single-stranded crossover between two homologous DNA duplexes (Holliday junction).. Functionally, the RuvA-RuvB-RuvC complex processes Holliday junction (HJ) DNA during genetic recombination and DNA repair. Endonuclease that resolves HJ intermediates. Cleaves cruciform DNA by making single-stranded nicks across the HJ at symmetrical positions within the homologous arms, yielding a 5'-phosphate and a 3'-hydroxyl group; requires a central core of homology in the junction. The consensus cleavage sequence is 5'-(A/T)TT(C/G)-3'. Cleavage occurs on the 3'-side of the TT dinucleotide at the point of strand exchange. HJ branch migration catalyzed by RuvA-RuvB allows RuvC to scan DNA until it finds its consensus sequence, where it cleaves and resolves the cruciform DNA. In Alkaliphilus oremlandii (strain OhILAs) (Clostridium oremlandii (strain OhILAs)), this protein is Crossover junction endodeoxyribonuclease RuvC.